Reading from the N-terminus, the 481-residue chain is ATP synthase subunit beta (481 aa).

167 to 174 provides a ligand contact to ATP; that stretch reads GGAGVGKT.

This sequence belongs to the ATPase alpha/beta chains family. F-type ATPases have 2 components, CF(1) - the catalytic core - and CF(0) - the membrane proton channel. CF(1) has five subunits: alpha(3), beta(3), gamma(1), delta(1), epsilon(1). CF(0) has three main subunits: a(1), b(2) and c(9-12). The alpha and beta chains form an alternating ring which encloses part of the gamma chain. CF(1) is attached to CF(0) by a central stalk formed by the gamma and epsilon chains, while a peripheral stalk is formed by the delta and b chains.

It is found in the cell membrane. The catalysed reaction is ATP + H2O + 4 H(+)(in) = ADP + phosphate + 5 H(+)(out). Functionally, produces ATP from ADP in the presence of a proton gradient across the membrane. The catalytic sites are hosted primarily by the beta subunits. The sequence is that of ATP synthase subunit beta from Corynebacterium diphtheriae (strain ATCC 700971 / NCTC 13129 / Biotype gravis).